An 82-amino-acid chain; its full sequence is MKSIIINFVRLYQKWISPLFPPSCRYRPTCSTYMIEAVEKHGIKGVLMGIARILRCHPFVEGGEDPVPDEFTLRRNPQKGKK.

Belongs to the UPF0161 family.

It localises to the cell membrane. Its function is as follows. Could be involved in insertion of integral membrane proteins into the membrane. The protein is Putative membrane protein insertion efficiency factor of Streptococcus uberis (strain ATCC BAA-854 / 0140J).